Reading from the N-terminus, the 318-residue chain is Ribosomal RNA small subunit methyltransferase H (318 aa).

S-adenosyl-L-methionine contacts are provided by residues 33-35 (GGH), aspartate 53, phenylalanine 80, aspartate 101, and glutamine 108.

It belongs to the methyltransferase superfamily. RsmH family.

Its subcellular location is the cytoplasm. It carries out the reaction cytidine(1402) in 16S rRNA + S-adenosyl-L-methionine = N(4)-methylcytidine(1402) in 16S rRNA + S-adenosyl-L-homocysteine + H(+). In terms of biological role, specifically methylates the N4 position of cytidine in position 1402 (C1402) of 16S rRNA. The sequence is that of Ribosomal RNA small subunit methyltransferase H from Symbiobacterium thermophilum (strain DSM 24528 / JCM 14929 / IAM 14863 / T).